An 811-amino-acid chain; its full sequence is Elongation factor G, mitochondrial (811 aa).

The N-terminal 64 residues, 1–64, are a transit peptide targeting the mitochondrion; that stretch reads MSAIARAAAR…FQQSFQRRWA (64 aa). One can recognise a tr-type G domain in the interval 96–394; the sequence is RRQRNVGISA…GVCAYLPNPS (299 aa). GTP contacts are provided by residues 105 to 112, 192 to 196, and 246 to 249; these read AHIDSGKT, DTPGH, and NKMD.

It belongs to the TRAFAC class translation factor GTPase superfamily. Classic translation factor GTPase family. EF-G/EF-2 subfamily.

The protein resides in the mitochondrion. The protein operates within protein biosynthesis; polypeptide chain elongation. In terms of biological role, mitochondrial GTPase that catalyzes the GTP-dependent ribosomal translocation step during translation elongation. During this step, the ribosome changes from the pre-translocational (PRE) to the post-translocational (POST) state as the newly formed A-site-bound peptidyl-tRNA and P-site-bound deacylated tRNA move to the P and E sites, respectively. Catalyzes the coordinated movement of the two tRNA molecules, the mRNA and conformational changes in the ribosome. The polypeptide is Elongation factor G, mitochondrial (Cryptococcus neoformans var. neoformans serotype D (strain B-3501A) (Filobasidiella neoformans)).